The following is a 165-amino-acid chain: Destrin (165 aa).

N-acetylalanine is present on Ala-2. Positions 4-153 constitute an ADF-H domain; the sequence is GVQVADEVCR…NRACIAEKLG (150 aa). A Nuclear localization signal motif is present at residues 30–34; it reads KKRKK.

The protein belongs to the actin-binding proteins ADF family.

Functionally, actin-depolymerizing protein. Severs actin filaments (F-actin) and binds to actin monomers (G-actin). Acts in a pH-independent manner. The protein is Destrin (DSTN) of Gallus gallus (Chicken).